Reading from the N-terminus, the 293-residue chain is MAGSREIRNKIKSVKNTQKITRAMEMVAASKMRRAQERMKKARPYGEKIRNVAAHMSRAYTEYRHPFLIERDTVKRIGIIVVTSDKGLCGGLNTNVLRMAVSKMKAWEAEGEQIEVCCIGNKGLGFMNRMGANVISHAVSLGDAPDLERLIGAIKILLDGYNQDRFDRVYLFYTRFINTMKQEPVMEQLLPLSDERLRASDRPTGQRGVWDYIYEPEAKPVIDDIMVRYVEALIYQALTENIASEQSARMVAMKAASDNAGNVINELTLIYNKSRQAAITKELSEIVGGAAAV.

Belongs to the ATPase gamma chain family. As to quaternary structure, F-type ATPases have 2 components, CF(1) - the catalytic core - and CF(0) - the membrane proton channel. CF(1) has five subunits: alpha(3), beta(3), gamma(1), delta(1), epsilon(1). CF(0) has three main subunits: a, b and c.

The protein resides in the cell inner membrane. Produces ATP from ADP in the presence of a proton gradient across the membrane. The gamma chain is believed to be important in regulating ATPase activity and the flow of protons through the CF(0) complex. In Nitrosospira multiformis (strain ATCC 25196 / NCIMB 11849 / C 71), this protein is ATP synthase gamma chain.